An 87-amino-acid chain; its full sequence is Cell division topological specificity factor (87 aa).

The protein belongs to the MinE family.

Functionally, prevents the cell division inhibition by proteins MinC and MinD at internal division sites while permitting inhibition at polar sites. This ensures cell division at the proper site by restricting the formation of a division septum at the midpoint of the long axis of the cell. In Neisseria gonorrhoeae (strain ATCC 700825 / FA 1090), this protein is Cell division topological specificity factor.